The chain runs to 59 residues: Large ribosomal subunit protein bL32 (59 aa).

Positions 1–59 (MAVQQNRKTPSKRGMRRSHDSLSKPTLSTEQNTGETHRRHHISADGYYRGRKVTRGQDD) are disordered. Residues 23–34 (SKPTLSTEQNTG) are compositionally biased toward polar residues. The segment covering 49-59 (RGRKVTRGQDD) has biased composition (basic residues).

It belongs to the bacterial ribosomal protein bL32 family.

The polypeptide is Large ribosomal subunit protein bL32 (Halorhodospira halophila (strain DSM 244 / SL1) (Ectothiorhodospira halophila (strain DSM 244 / SL1))).